The chain runs to 244 residues: Flagellar L-ring protein (244 aa).

The signal sequence occupies residues 1-18 (MNMRVFIFLIFAAASVSA). C19 carries the N-palmitoyl cysteine lipid modification. C19 carries S-diacylglycerol cysteine lipidation.

The protein belongs to the FlgH family. The basal body constitutes a major portion of the flagellar organelle and consists of four rings (L,P,S, and M) mounted on a central rod.

It is found in the cell outer membrane. The protein resides in the bacterial flagellum basal body. Its function is as follows. Assembles around the rod to form the L-ring and probably protects the motor/basal body from shearing forces during rotation. The protein is Flagellar L-ring protein of Jannaschia sp. (strain CCS1).